The chain runs to 106 residues: Gibberellin-regulated protein 4 (106 aa).

A signal peptide spans 1-25 (MAKSYGAIFLLTLIVLFMLQTMVMA).

Belongs to the GASA family. In terms of processing, six disulfide bonds may be present. As to expression, expressed in flower buds, style, stamen filaments, vasculature of petals, root phloem, vasculature of cotyledons and rosette leaves and developing embryo.

It is found in the secreted. Its function is as follows. Gibberellin-regulated protein involved in the regulation of floral meristem and floral organ identity, and promotion of seed size and weight. May play a role in the promotion of gibberellin responses such as regulation of flowering under short-day conditions, seed germination and inhibition of gibberellin oxidase. Possesses redox activity in E.coli and may function in redox regulation in planta. This chain is Gibberellin-regulated protein 4 (GASA4), found in Arabidopsis thaliana (Mouse-ear cress).